A 176-amino-acid polypeptide reads, in one-letter code: Prion-like protein doppel (176 aa).

An N-terminal signal peptide occupies residues 1–25 (MRKHLSWWWLATVCMLLFSHLSAVQ). Residues 27–50 (RGIKHRIKWNRKALPSTAQITEAQ) are flexible tail. Threonine 43 is a glycosylation site (O-linked (GalNAc...) threonine). Residues 51–152 (VAENRPGAFI…KHCEFWLERG (102 aa)) form a globular region. Intrachain disulfides connect cysteine 94-cysteine 145 and cysteine 108-cysteine 140. 2 N-linked (GlcNAc...) asparagine glycosylation sites follow: asparagine 98 and asparagine 110. The tract at residues 122–139 (KPDNKLHQQVLWRLVQEL) is cu(2+) binding. Glycine 152 is lipidated: GPI-anchor amidated glycine. Positions 153-176 (AGLRVTMHQPVLLCLLALIWLTVK) are cleaved as a propeptide — removed in mature form.

Belongs to the prion family. In terms of processing, N-glycosylated. N-glycosylated at two distinct sites. Post-translationally, O-glycosylated. As to expression, expressed in testis, in Sertoli cells, ejaculated spermatozoa and in seminal fluid (at protein level).

It localises to the cell membrane. In terms of biological role, required for normal acrosome reaction and for normal male fertility. Can bind Cu(2+). This Homo sapiens (Human) protein is Prion-like protein doppel (PRND).